Here is a 310-residue protein sequence, read N- to C-terminus: tRNA dimethylallyltransferase (310 aa).

24-31 (GPTASGKT) provides a ligand contact to ATP. Substrate is bound at residue 26–31 (TASGKT). The interval 49–52 (DSRQ) is interaction with substrate tRNA.

It belongs to the IPP transferase family. In terms of assembly, monomer. The cofactor is Mg(2+).

It catalyses the reaction adenosine(37) in tRNA + dimethylallyl diphosphate = N(6)-dimethylallyladenosine(37) in tRNA + diphosphate. In terms of biological role, catalyzes the transfer of a dimethylallyl group onto the adenine at position 37 in tRNAs that read codons beginning with uridine, leading to the formation of N6-(dimethylallyl)adenosine (i(6)A). The polypeptide is tRNA dimethylallyltransferase (Synechococcus sp. (strain WH7803)).